The primary structure comprises 886 residues: Phycobiliprotein ApcE (886 aa).

Cysteine 187 serves as a coordination point for (2R,3E)-phycocyanobilin. 3 PBS-linker domains span residues 244 to 424, 496 to 678, and 695 to 876; these read DLQG…FRKV, QVRP…ISSK, and NDIQ…SVVV.

Belongs to the phycobilisome linker protein family. Post-translationally, contains one covalently linked bilin chromophore. This protein autochromophorylates (Potential).

Its subcellular location is the plastid. It is found in the chloroplast thylakoid membrane. This protein is postulated to act both as terminal energy acceptor and as a linker polypeptide that stabilizes the phycobilisome architecture. May have intrinsic bilin lyase activity. The chain is Phycobiliprotein ApcE (apcE) from Porphyra purpurea (Red seaweed).